The following is a 335-amino-acid chain: MLRDIPFFWRKRCWQSWVLLPLSLIFRALVLLRRQLYRLGVIASYRAPVPVIVVGNVTVGGNGKTPLVIALVNALQEKGWKVGVISRGYGGNRRKPVLVNEKSDVRTVGDEPLLIHQKTRAPVSVYYRRQRAIENLLMHFPETELIISDDGLQHYALQYDCALLAIAADFGLGNGFCLPAGALREPLPPFATIDAIITTGKMSTALPISAPQFVTTFKNDQFYRSNGERISIETLKENPLYVVTAIARPERFLNRLHALGISPVISKIFADHAMLHESMLTFAADGLILMTTKDQVKTQNWSAFWQEKIIVLSDELTIDEELISLILSCATRTRK.

58–65 (TVGGNGKT) lines the ATP pocket.

The protein belongs to the LpxK family.

The catalysed reaction is a lipid A disaccharide + ATP = a lipid IVA + ADP + H(+). The protein operates within glycolipid biosynthesis; lipid IV(A) biosynthesis; lipid IV(A) from (3R)-3-hydroxytetradecanoyl-[acyl-carrier-protein] and UDP-N-acetyl-alpha-D-glucosamine: step 6/6. Functionally, transfers the gamma-phosphate of ATP to the 4'-position of a tetraacyldisaccharide 1-phosphate intermediate (termed DS-1-P) to form tetraacyldisaccharide 1,4'-bis-phosphate (lipid IVA). The sequence is that of Tetraacyldisaccharide 4'-kinase from Dichelobacter nodosus (strain VCS1703A).